A 337-amino-acid polypeptide reads, in one-letter code: GTPase Obg (337 aa).

In terms of domain architecture, Obg spans 1–158; it reads MFVDRVIIEL…HHIELELKLI (158 aa). Residues 159–330 enclose the OBG-type G domain; sequence ADVGLVGFPN…LIEKMTQRLS (172 aa). Residues 165 to 172, 190 to 194, 212 to 215, 282 to 285, and 311 to 313 contribute to the GTP site; these read GFPNAGKS, FTTLQ, DIPG, NKID, and SAV. Ser-172 and Thr-192 together coordinate Mg(2+).

The protein belongs to the TRAFAC class OBG-HflX-like GTPase superfamily. OBG GTPase family. As to quaternary structure, monomer. It depends on Mg(2+) as a cofactor.

The protein resides in the cytoplasm. In terms of biological role, an essential GTPase which binds GTP, GDP and possibly (p)ppGpp with moderate affinity, with high nucleotide exchange rates and a fairly low GTP hydrolysis rate. Plays a role in control of the cell cycle, stress response, ribosome biogenesis and in those bacteria that undergo differentiation, in morphogenesis control. In Protochlamydia amoebophila (strain UWE25), this protein is GTPase Obg.